We begin with the raw amino-acid sequence, 87 residues long: UPF0248 protein TSIB_1445 (87 aa).

Belongs to the UPF0248 family.

The polypeptide is UPF0248 protein TSIB_1445 (Thermococcus sibiricus (strain DSM 12597 / MM 739)).